A 147-amino-acid polypeptide reads, in one-letter code: Hemoglobin subunit beta (147 aa).

V2 is subject to N-acetylvaline. One can recognise a Globin domain in the interval 3–147; the sequence is HLTPDEKAAV…VANALAHKYH (145 aa). T13 carries the phosphothreonine modification. Position 45 is a phosphoserine (S45). N6-acetyllysine is present on K60. Heme b is bound at residue H64. K83 is subject to N6-acetyllysine. H93 lines the heme b pocket. The residue at position 94 (C94) is an S-nitrosocysteine. K145 carries the post-translational modification N6-acetyllysine.

This sequence belongs to the globin family. In terms of assembly, heterotetramer of two alpha chains and two beta chains. As to expression, red blood cells.

Its function is as follows. Involved in oxygen transport from the lung to the various peripheral tissues. The sequence is that of Hemoglobin subunit beta (HBB) from Colobus polykomos (Western black-and-white colobus monkey).